Here is a 215-residue protein sequence, read N- to C-terminus: Pyridoxine/pyridoxamine 5'-phosphate oxidase (215 aa).

Residues Arg-9–Tyr-12 and Lys-69 contribute to the substrate site. FMN-binding positions include Arg-64–Lys-69, Phe-79–Thr-80, Lys-86, and Gln-108. Substrate is bound by residues Tyr-126, Arg-130, and Ser-134. Residues Gln-143–Ser-144 and Trp-188 contribute to the FMN site. Arg-194–His-196 contributes to the substrate binding site. Arg-198 provides a ligand contact to FMN.

Belongs to the pyridoxamine 5'-phosphate oxidase family. As to quaternary structure, homodimer. It depends on FMN as a cofactor.

It catalyses the reaction pyridoxamine 5'-phosphate + O2 + H2O = pyridoxal 5'-phosphate + H2O2 + NH4(+). The catalysed reaction is pyridoxine 5'-phosphate + O2 = pyridoxal 5'-phosphate + H2O2. The protein operates within cofactor metabolism; pyridoxal 5'-phosphate salvage; pyridoxal 5'-phosphate from pyridoxamine 5'-phosphate: step 1/1. It functions in the pathway cofactor metabolism; pyridoxal 5'-phosphate salvage; pyridoxal 5'-phosphate from pyridoxine 5'-phosphate: step 1/1. Its function is as follows. Catalyzes the oxidation of either pyridoxine 5'-phosphate (PNP) or pyridoxamine 5'-phosphate (PMP) into pyridoxal 5'-phosphate (PLP). This is Pyridoxine/pyridoxamine 5'-phosphate oxidase from Pseudomonas fluorescens (strain Pf0-1).